The sequence spans 86 residues: Defensin-like protein a (86 aa).

Positions 1 to 23 are cleaved as a signal peptide; that stretch reads MRCSVLFVVSYVIMSLLISHVQG. Disulfide bonds link cysteine 33/cysteine 81, cysteine 43/cysteine 67, cysteine 51/cysteine 76, and cysteine 65/cysteine 78.

Belongs to the DEFL family. In terms of tissue distribution, expressed specifically in anthers.

The protein localises to the secreted. Involved in self-incompatibility. This chain is Defensin-like protein a (SCRa), found in Arabidopsis lyrata (Lyre-leaved rock-cress).